The sequence spans 151 residues: Protein-export protein SecB (151 aa).

Belongs to the SecB family. Homotetramer, a dimer of dimers. One homotetramer interacts with 1 SecA dimer.

It is found in the cytoplasm. Functionally, one of the proteins required for the normal export of preproteins out of the cell cytoplasm. It is a molecular chaperone that binds to a subset of precursor proteins, maintaining them in a translocation-competent state. It also specifically binds to its receptor SecA. In Acinetobacter baylyi (strain ATCC 33305 / BD413 / ADP1), this protein is Protein-export protein SecB.